The primary structure comprises 337 residues: MSVTLAIDAMGGDHGVVVTVSAACDFLEKHADVKIALVGDPDLIKQVLSKSPKAPMERIQIILASEVVLMDDPIEVALRRKKDSSMRVAIEQVKEGAADAVISSGNTGALMAISRYILKTLEGVDRPAIATAIPNELGRGTTMLDLGANADCEPMHLVQFAQMANVMVQVVDGEQNPSIGLLNIGEEVIKGNEVVKQTSELLRQTSLNFYGNVEGNDIFRGTTDIVVCDGFVGNVVLKASEGLAKMMSGLIREEFNRSLLTKLMAVCAIVPLLRVRKRVDHRRYNGAVLLGLRGCVIKSHGSADRFAFGFALDRAYEAAKNRMVERIAAAFVVETKV.

Belongs to the PlsX family. In terms of assembly, homodimer. Probably interacts with PlsY.

It localises to the cytoplasm. It catalyses the reaction a fatty acyl-[ACP] + phosphate = an acyl phosphate + holo-[ACP]. It functions in the pathway lipid metabolism; phospholipid metabolism. In terms of biological role, catalyzes the reversible formation of acyl-phosphate (acyl-PO(4)) from acyl-[acyl-carrier-protein] (acyl-ACP). This enzyme utilizes acyl-ACP as fatty acyl donor, but not acyl-CoA. In Polynucleobacter necessarius subsp. necessarius (strain STIR1), this protein is Phosphate acyltransferase.